The sequence spans 217 residues: MPTNCAAAGCAATYNKHINISFHRFPLDPKRRKEWVRLVRRKNFVPGKHTFLCSKHFEASCFDLTGQTRRLKMDAVPTIFDFCTHIKSLKLKSRNLLKTNNSFPPTGPCNLKLNGSQQVLLEHSYAFRNPMEAKKRIIKLEKEIASLRKKMKTCLQRERRATRRWIKATCFVKSLEASNMLPKGISEQILPTALSNLPLEDLKSLEQDQQDKTVPIL.

Residues 1 to 80 (MPTNCAAAGC…LKMDAVPTIF (80 aa)) form a THAP-type zinc finger. The short motif at 122–125 (EHSY) is the HCFC1-binding motif (HBM) element.

This chain is THAP domain-containing protein 2 (Thap2), found in Mus musculus (Mouse).